The following is a 419-amino-acid chain: Inward rectifier potassium channel 16 (419 aa).

Over 1–67 (MSYYGSSYRI…MVDIFTTLVD (67 aa)) the chain is Cytoplasmic. A helical membrane pass occupies residues 68–94 (TKWRHMFVIFSLSYILSWLIFGSIFWL). The Extracellular portion of the chain corresponds to 95–117 (IAFHHGDLLSDPDITPCVDNVHS). An intramembrane region (helical; Pore-forming) is located at residues 118–134 (FTAAFLFSLETQTTIGY). Positions 131–136 (TIGYGY) match the Selectivity filter motif. Topologically, residues 135–143 (GYRCVTEEC) are extracellular. Residues 144-171 (SVAVLTVILQSILSCIINTFIIGAALAK) form a helical membrane-spanning segment. Over 172-419 (MATARKRAQT…LNRISMESQM (248 aa)) the chain is Cytoplasmic. Phosphoserine is present on residues Ser358, Ser374, and Ser376.

It belongs to the inward rectifier-type potassium channel (TC 1.A.2.1) family. KCNJ16 subfamily. As to quaternary structure, it forms heteromeric channels with Kir4.1/KCNJ10; this interaction is required for KCNJ16 localization to the basolateral membrane in kidney cells. As a heteromer with KCNJ10, may interact with MAGI1; this interaction may facilitate KCNJ10/KCNJ16 potassium channel expression at the basolateral membrane in kidney cells. May form heteromers with Kir2.1/KCNJ2. Can form heteromeric channels with Kir4.2/KCNJ15. Abundantly expressed in the proximal and distal segments of the nephron.

The protein resides in the membrane. It is found in the basolateral cell membrane. The enzyme catalyses K(+)(in) = K(+)(out). Channel activity is strongly regulated by variations of cytosolic pH; channels are activated by alkaline and inhibited by acidic pH values. Activated by phosphatidylinositol 4,5 biphosphate (PtdIns(4,5)P2). Its function is as follows. Inward rectifier potassium channels are characterized by a greater tendency to allow potassium to flow into the cell rather than out of it. Their voltage dependence is regulated by the concentration of extracellular potassium; as external potassium is raised, the voltage range of the channel opening shifts to more positive voltages. The inward rectification is mainly due to the blockage of outward current by internal magnesium. KCNJ16 may be involved in the regulation of fluid and pH balance. In the kidney, together with KCNJ10, mediates basolateral K(+) recycling in distal tubules; this process is critical for Na(+) reabsorption at the tubules. The protein is Inward rectifier potassium channel 16 (Kcnj16) of Mus musculus (Mouse).